Consider the following 481-residue polypeptide: ATP synthase subunit beta (481 aa).

G160–T167 serves as a coordination point for ATP.

This sequence belongs to the ATPase alpha/beta chains family. In terms of assembly, F-type ATPases have 2 components, CF(1) - the catalytic core - and CF(0) - the membrane proton channel. CF(1) has five subunits: alpha(3), beta(3), gamma(1), delta(1), epsilon(1). CF(0) has three main subunits: a(1), b(2) and c(9-12). The alpha and beta chains form an alternating ring which encloses part of the gamma chain. CF(1) is attached to CF(0) by a central stalk formed by the gamma and epsilon chains, while a peripheral stalk is formed by the delta and b chains.

The protein resides in the cell inner membrane. The enzyme catalyses ATP + H2O + 4 H(+)(in) = ADP + phosphate + 5 H(+)(out). Its function is as follows. Produces ATP from ADP in the presence of a proton gradient across the membrane. The catalytic sites are hosted primarily by the beta subunits. The protein is ATP synthase subunit beta of Anaeromyxobacter sp. (strain Fw109-5).